Here is a 216-residue protein sequence, read N- to C-terminus: Octanoyltransferase (216 aa).

Residues 33 to 216 form the BPL/LPL catalytic domain; that stretch reads AQTADELWIV…AEKLTRHLSG (184 aa). Residues 72 to 79, 148 to 150, and 162 to 164 each bind substrate; these read RGGEVTYH, ALG, and GVS. Cys180 acts as the Acyl-thioester intermediate in catalysis.

Belongs to the LipB family.

The protein localises to the cytoplasm. It carries out the reaction octanoyl-[ACP] + L-lysyl-[protein] = N(6)-octanoyl-L-lysyl-[protein] + holo-[ACP] + H(+). Its pathway is protein modification; protein lipoylation via endogenous pathway; protein N(6)-(lipoyl)lysine from octanoyl-[acyl-carrier-protein]: step 1/2. In terms of biological role, catalyzes the transfer of endogenously produced octanoic acid from octanoyl-acyl-carrier-protein onto the lipoyl domains of lipoate-dependent enzymes. Lipoyl-ACP can also act as a substrate although octanoyl-ACP is likely to be the physiological substrate. In Herminiimonas arsenicoxydans, this protein is Octanoyltransferase.